The following is a 137-amino-acid chain: MTLNLRVLSPNRVIWDSEVKEIILSTNSGQIGVLPNHASLVAAVDIGVMKIRLNGQWSTMAMMGGFAKIDSDRITILVNNAERDVDIDPREAQENFRIAKADLARAEGKRQAIEADLALKRARTRLEAINASPPVSN.

This sequence belongs to the ATPase epsilon chain family. F-type ATPases have 2 components, CF(1) - the catalytic core - and CF(0) - the membrane proton channel. CF(1) has five subunits: alpha(3), beta(3), gamma(1), delta(1), epsilon(1). CF(0) has three main subunits: a, b and c.

Its subcellular location is the plastid. The protein resides in the chloroplast thylakoid membrane. Functionally, produces ATP from ADP in the presence of a proton gradient across the membrane. This chain is ATP synthase epsilon chain, chloroplastic, found in Pinus thunbergii (Japanese black pine).